Here is a 116-residue protein sequence, read N- to C-terminus: Large ribosomal subunit protein bL19 (116 aa).

Belongs to the bacterial ribosomal protein bL19 family.

Functionally, this protein is located at the 30S-50S ribosomal subunit interface and may play a role in the structure and function of the aminoacyl-tRNA binding site. In Stutzerimonas stutzeri (strain A1501) (Pseudomonas stutzeri), this protein is Large ribosomal subunit protein bL19.